Reading from the N-terminus, the 796-residue chain is Endonuclease MutS2 (796 aa).

339–346 (GPNTGGKT) provides a ligand contact to ATP. Residues 620–644 (EKLGDTDSSLVSKAKKNRKQHKPSD) are disordered. A Smr domain is found at 721-796 (LNIIGKRVDE…DHGVTIVEFK (76 aa)).

The protein belongs to the DNA mismatch repair MutS family. MutS2 subfamily. Homodimer. Binds to stalled ribosomes, contacting rRNA.

In terms of biological role, endonuclease that is involved in the suppression of homologous recombination and thus may have a key role in the control of bacterial genetic diversity. Functionally, acts as a ribosome collision sensor, splitting the ribosome into its 2 subunits. Detects stalled/collided 70S ribosomes which it binds and splits by an ATP-hydrolysis driven conformational change. Acts upstream of the ribosome quality control system (RQC), a ribosome-associated complex that mediates the extraction of incompletely synthesized nascent chains from stalled ribosomes and their subsequent degradation. Probably generates substrates for RQC. This Lachnoclostridium phytofermentans (strain ATCC 700394 / DSM 18823 / ISDg) (Clostridium phytofermentans) protein is Endonuclease MutS2.